The chain runs to 388 residues: Sex-determination protein fem-3 (388 aa).

6 repeat units span residues 7–10, 110–113, 141–144, 234–237, 284–287, and 371–374.

In terms of assembly, component of a complex containing fem-1, fem-2 and fem-3. Interacts with fem-1 and fem-2 (via N-terminus). Part of a E3 ubiquitin-protein ligase complex, at least composed of cul-2, elc-1, tra-1, fem-1, fem-2 and fem-3; mediates the ubiquitination and subsequent proteasomal degradation of tra-1. Interacts with tra-1. Interacts with sel-10. Interacts with tra-2.

Functionally, required for male development. In XO (male) animals, fem-3 directs male differentiation in all tissues. In XX (hermaphrodite) animals, it specifies the first 80 or so germ cells to be sperm. Negatively regulates male development when bound to tra-2. Together with fem-2 associates with the CBC(fem-1) E3 ubiquitin-protein ligase complex which mediates the ubiquitination and subsequent proteasomal degradation of tra-1. The polypeptide is Sex-determination protein fem-3 (fem-3) (Caenorhabditis elegans).